The primary structure comprises 79 residues: Ixosin (79 aa).

Positions 1–56 (MSAHKVQIGLSSGQFRVALQVPSVRLKGLGSFHTGSIVLPSQGSLREDQISLHNQD) are cleaved as a propeptide — removed in mature form.

Has antifungal activity against C.albicans. Has antibacterial activity against the Gram-positive bacterium S.aureus and the Gram-negative bacterium E.coli. Lacks hemolytic activity against rabbit erythrocytes. The protein is Ixosin of Ixodes sinensis (Hard tick).